The primary structure comprises 708 residues: Capsid scaffolding protein (708 aa).

Active-site charge relay system residues include histidine 63, serine 132, and histidine 157. 3 disordered regions span residues 269–339, 455–565, and 593–619; these read ASAE…MSHP, HPSY…QQQR, and ALPSAASSSPTTTTVCTPTGELTSGGG. Over residues 284–293 the composition is skewed to low complexity; the sequence is PAAGARVPSS. The segment covering 294–311 has biased composition (pro residues); that stretch reads SPSPPVEPPSPVQPPALP. The segment covering 326–339 has biased composition (low complexity); that stretch reads SPSEPAEAASMSHP. Residues 333 to 352 are interaction with pAP; that stretch reads AASMSHPLSAAVPAATAPPG. Over residues 498–513 the composition is skewed to basic residues; it reads KQHRHGGSGGHNKRRK. 2 consecutive short sequence motifs (nuclear localization signal) follow at residues 510-515 and 537-543; these read KRRKET and RARKRLK. Residues 593–611 show a composition bias toward low complexity; that stretch reads ALPSAASSSPTTTTVCTPT. The interval 688 to 708 is interaction with major capsid protein; sequence PPKDMVDLNRRIFVAALNKLE.

The protein belongs to the herpesviridae capsid scaffolding protein family. As to quaternary structure, homomultimer. Interacts with major capsid protein. In terms of assembly, exists in a monomer-dimer equilibrium with the dimer being the active species. Post-translationally, capsid scaffolding protein is cleaved by assemblin after formation of the spherical procapsid. As a result, the capsid obtains its mature, icosahedral shape. Cleavages occur at two or more sites: release (R-site) and maturation (M-site).

It is found in the host cytoplasm. The protein resides in the host nucleus. The enzyme catalyses Cleaves -Ala-|-Ser- and -Ala-|-Ala- bonds in the scaffold protein.. Functionally, acts as a scaffold protein by binding major capsid protein in the cytoplasm, inducing the nuclear localization of both proteins. Multimerizes in the nucleus such as major capsid protein forms the icosahedral T=16 capsid. Autocatalytic cleavage releases the assembly protein, and subsequently abolishes interaction with major capsid protein. Cleavages products are evicted from the capsid before or during DNA packaging. Its function is as follows. Protease that plays an essential role in virion assembly within the nucleus. Catalyzes the cleavage of the assembly protein after formation of the spherical procapsid. By that cleavage, the capsid matures and gains its icosahedral shape. The cleavage sites seem to include -Ala-Ser-, -Ala-Ala-, as well as Ala-Thr bonds. Assemblin and cleavages products are evicted from the capsid before or during DNA packaging. In terms of biological role, plays a major role in capsid assembly. Acts as a scaffold protein by binding major capsid protein. Multimerizes in the nucleus such as major capsid protein forms the icosahedral T=16 capsid. Cleaved by assemblin after capsid completion. The cleavages products are evicted from the capsid before or during DNA packaging. The sequence is that of Capsid scaffolding protein (UL80) from Homo sapiens (Human).